A 935-amino-acid polypeptide reads, in one-letter code: Coatomer subunit gamma (935 aa).

HEAT repeat units lie at residues 258-296 (PQLFSQFRPLLSDWLSNKFESVQLETAKLITSFATRNSR), 337-372 (PEKIVVCNPELESLINDSNRNISTYAITTLLKTGTS), 373-410 (KNISSLISTITNFIHDVSDDFKIIIIDAVRTLSLNFPQ), 412-449 (WKSILNFLIDVLKNSEGGFKFKNSIVEALIDIVSFVPQ), and 524-562 (PTLYESIISLLKRIANDKDDEVRDRATIALEFIDSARNK). The tract at residues 630 to 656 (KSETTLDTTPEAESVPEKRADANSFAG) is disordered. Thr-638 bears the Phosphothreonine mark. Position 643 is a phosphoserine (Ser-643). Residue Lys-647 forms a Glycyl lysine isopeptide (Lys-Gly) (interchain with G-Cter in ubiquitin) linkage. Phosphoserine is present on Ser-653.

Belongs to the COPG family. Oligomeric complex that consists of at least the alpha, beta, beta', gamma, delta, epsilon and zeta subunits. Interacts (via C-terminus) with GEA1 (via N-terminal region) and KEI1 (via C-terminal region).

Its subcellular location is the cytoplasm. The protein localises to the golgi apparatus membrane. The protein resides in the cytoplasmic vesicle. It is found in the COPI-coated vesicle membrane. It localises to the endosome. Functionally, the coatomer is a cytosolic protein complex that binds to dilysine motifs and reversibly associates with Golgi non-clathrin-coated vesicles, which further mediate biosynthetic protein transport from the ER, via the Golgi up to the trans Golgi network. Coatomer complex is required for budding from Golgi membranes, and is essential for the retrograde Golgi-to-ER transport of dilysine-tagged proteins. The protein is Coatomer subunit gamma (SEC21) of Saccharomyces cerevisiae (strain ATCC 204508 / S288c) (Baker's yeast).